The following is a 584-amino-acid chain: MPIRILPSDLSSQISAGEIIERPASVVKEIIENSIDAGSKNINIIVENSGFQSIILKDDGCGIDKKDLLLAVCHHATSKINSLSDLDKLTTFGFRGEALASIRAVSRLTLISCTRFNDVAAKIYLEGFCSKNIILQPIAHPEGTTIIVDNLFYNIPVRLKFLKNKKLEFSKICEVVKKIALSHFYINFSLKHNNKLITQYNSINNRKNKINRLKDIFDTLDTSEFLEIKEKKYRMVLFGWISHPYNFKKIKNIQYCYVNNRYLYNNIFVNAVRAAYSKIEQKKNISFVLYLTIESFNIDINIHPTKNEIKFHNPDVVYTFIYEAVFSYLKKIKEKYYFNFSCKKQTQLNKEKEFYFYDSDPTFLTLISSIFFKKKQIFKNIKNKIKHNNFISKSTPLEKYESSIGRLLIIIHKYYGLIYHDNNFLLLSFPVAKGIVRKQKLKNNIQKENIIEYFLSNIKINLTSQEYLILFNQKEILSKFGFHLIFKKKYVILSSIPAFLKKCNFHIIISNFFAFLFLKKQVFISDIVDWFYINVFIELKNWTYIRGIEVLLEIEYYCPLLLINPPSKLLQKININAALCILKI.

The protein belongs to the DNA mismatch repair MutL/HexB family.

In terms of biological role, this protein is involved in the repair of mismatches in DNA. It is required for dam-dependent methyl-directed DNA mismatch repair. May act as a 'molecular matchmaker', a protein that promotes the formation of a stable complex between two or more DNA-binding proteins in an ATP-dependent manner without itself being part of a final effector complex. The polypeptide is DNA mismatch repair protein MutL (Buchnera aphidicola subsp. Acyrthosiphon pisum (strain Tuc7)).